Here is a 280-residue protein sequence, read N- to C-terminus: 3,2-trans-enoyl-CoA isomerase (280 aa).

Substrate-binding positions include 68-72 (SGADF) and leucine 126. Glutamate 158 (proton donor/acceptor) is an active-site residue. Positions 278–280 (HRL) match the Microbody targeting signal motif.

The protein belongs to the enoyl-CoA hydratase/isomerase family. Homohexamer, dimer of trimers. Interacts with DCI1.

It localises to the peroxisome. It carries out the reaction a (3Z)-enoyl-CoA = a 4-saturated (2E)-enoyl-CoA. It catalyses the reaction a (3E)-enoyl-CoA = a 4-saturated (2E)-enoyl-CoA. It participates in lipid metabolism; fatty acid beta-oxidation. Essential for the beta oxidation of unsaturated fatty acids. The polypeptide is 3,2-trans-enoyl-CoA isomerase (ECI1) (Saccharomyces cerevisiae (strain ATCC 204508 / S288c) (Baker's yeast)).